The primary structure comprises 696 residues: DNA-directed RNA polymerase subunit beta' (696 aa).

The Zn(2+) site is built by Cys76, Cys78, Cys94, and Cys97. The Mg(2+) site is built by Asp496, Asp498, and Asp500.

This sequence belongs to the RNA polymerase beta' chain family. RpoC1 subfamily. As to quaternary structure, in plastids the minimal PEP RNA polymerase catalytic core is composed of four subunits: alpha, beta, beta', and beta''. When a (nuclear-encoded) sigma factor is associated with the core the holoenzyme is formed, which can initiate transcription. Requires Mg(2+) as cofactor. Zn(2+) serves as cofactor.

It is found in the plastid. Its subcellular location is the chloroplast. It carries out the reaction RNA(n) + a ribonucleoside 5'-triphosphate = RNA(n+1) + diphosphate. In terms of biological role, DNA-dependent RNA polymerase catalyzes the transcription of DNA into RNA using the four ribonucleoside triphosphates as substrates. The polypeptide is DNA-directed RNA polymerase subunit beta' (Guizotia abyssinica (Niger)).